Consider the following 403-residue polypeptide: Phosphoglycerate kinase (403 aa).

Residues 21 to 23 (DFN), arginine 36, 59 to 62 (HLGR), arginine 119, and arginine 154 each bind substrate. Residues lysine 207, glycine 299, glutamate 330, and 357 to 360 (GGDA) each bind ATP.

The protein belongs to the phosphoglycerate kinase family. As to quaternary structure, monomer.

The protein localises to the cytoplasm. It catalyses the reaction (2R)-3-phosphoglycerate + ATP = (2R)-3-phospho-glyceroyl phosphate + ADP. Its pathway is carbohydrate degradation; glycolysis; pyruvate from D-glyceraldehyde 3-phosphate: step 2/5. The sequence is that of Phosphoglycerate kinase from Chlamydia felis (strain Fe/C-56) (Chlamydophila felis).